Reading from the N-terminus, the 337-residue chain is Probable allantoicase 1 (337 aa).

Belongs to the allantoicase family.

It catalyses the reaction allantoate + H2O = (S)-ureidoglycolate + urea. The protein operates within nitrogen metabolism; (S)-allantoin degradation; (S)-ureidoglycolate from allantoate (aminidohydrolase route): step 1/1. The protein is Probable allantoicase 1 of Burkholderia mallei (strain ATCC 23344).